The following is a 310-amino-acid chain: MDWENCSSLTDFFLLGITNNPEMKVTLFAVFLAVYIINFSANLGMIVLIRMDYQLHTPMYFFLSHLSFCDLCYSTATGPKMLVDLLAKNKSIPFYGCALQFLVFCIFADSECLLLSVMAFDRYKAIINPLLYTVNMSSRVCYLLLTGVYLVGIADALIHMTLAFRLCFCGSNEINHFFCDIPPLLLLSRSDTQVNELVLFTVFGFIELSTISGVFISYCYIILSVLEIHSAEGRFKALSTCTSHLSAVAIFQGTLLFMYFRPSSSYSLDQDKMTSLFYTLVVPMLNPLIYSLRNKDVKEALKKLKNKILF.

Topologically, residues 1 to 25 (MDWENCSSLTDFFLLGITNNPEMKV) are extracellular. The N-linked (GlcNAc...) asparagine glycan is linked to N5. A helical membrane pass occupies residues 26–46 (TLFAVFLAVYIINFSANLGMI). The Cytoplasmic segment spans residues 47-54 (VLIRMDYQ). Residues 55–75 (LHTPMYFFLSHLSFCDLCYST) traverse the membrane as a helical segment. Residues 76-99 (ATGPKMLVDLLAKNKSIPFYGCAL) are Extracellular-facing. A helical membrane pass occupies residues 100-120 (QFLVFCIFADSECLLLSVMAF). At 121 to 139 (DRYKAIINPLLYTVNMSSR) the chain is on the cytoplasmic side. Residues 140–160 (VCYLLLTGVYLVGIADALIHM) form a helical membrane-spanning segment. At 161–196 (TLAFRLCFCGSNEINHFFCDIPPLLLLSRSDTQVNE) the chain is on the extracellular side. A helical membrane pass occupies residues 197–217 (LVLFTVFGFIELSTISGVFIS). The Cytoplasmic portion of the chain corresponds to 218 to 237 (YCYIILSVLEIHSAEGRFKA). A helical transmembrane segment spans residues 238-258 (LSTCTSHLSAVAIFQGTLLFM). The Extracellular segment spans residues 259–271 (YFRPSSSYSLDQD). Residues 272–292 (KMTSLFYTLVVPMLNPLIYSL) traverse the membrane as a helical segment. Residues 293-310 (RNKDVKEALKKLKNKILF) are Cytoplasmic-facing.

Belongs to the G-protein coupled receptor 1 family.

It localises to the cell membrane. Odorant receptor. In Homo sapiens (Human), this protein is Olfactory receptor 5W2 (OR5W2).